The following is an 82-amino-acid chain: MNNSKDNPFRGAIARKARIYLREGLDCVYFLNKAGQAEPCPACTSLVFQGKTCEEHIHNNNLLSWQAVKQLEKQTPQRQSLN.

Involved in host translation shutoff without degradating host RNA. By suppressing host gene expression, facilitates the evasion from host type I interferon immune response. This chain is Host translation inhibitor 5b, found in Gallus gallus (Chicken).